Reading from the N-terminus, the 647-residue chain is UvrABC system protein C (647 aa).

Residues 16-95 enclose the GIY-YIG domain; sequence VEPGVYRFRD…IKEFDPRFNV (80 aa). Residues 208-243 form the UVR domain; that stretch reads DRYARELEQQMNAAAENLDFERAARLRDDRSALKRA.

The protein belongs to the UvrC family. Interacts with UvrB in an incision complex.

Its subcellular location is the cytoplasm. The UvrABC repair system catalyzes the recognition and processing of DNA lesions. UvrC both incises the 5' and 3' sides of the lesion. The N-terminal half is responsible for the 3' incision and the C-terminal half is responsible for the 5' incision. The polypeptide is UvrABC system protein C (Mycobacterium marinum (strain ATCC BAA-535 / M)).